The following is a 354-amino-acid chain: Uroporphyrinogen decarboxylase (354 aa).

Residues Arg-27 to Arg-31, Asp-77, Tyr-154, Ser-209, and His-327 each bind substrate.

The protein belongs to the uroporphyrinogen decarboxylase family. Homodimer.

It localises to the cytoplasm. It catalyses the reaction uroporphyrinogen III + 4 H(+) = coproporphyrinogen III + 4 CO2. Its pathway is porphyrin-containing compound metabolism; protoporphyrin-IX biosynthesis; coproporphyrinogen-III from 5-aminolevulinate: step 4/4. Its function is as follows. Catalyzes the decarboxylation of four acetate groups of uroporphyrinogen-III to yield coproporphyrinogen-III. The sequence is that of Uroporphyrinogen decarboxylase from Pseudomonas savastanoi pv. phaseolicola (strain 1448A / Race 6) (Pseudomonas syringae pv. phaseolicola (strain 1448A / Race 6)).